The following is a 67-amino-acid chain: Large ribosomal subunit protein bL31 (67 aa).

Cys-16, Cys-18, Cys-36, and Cys-39 together coordinate Zn(2+).

It belongs to the bacterial ribosomal protein bL31 family. Type A subfamily. As to quaternary structure, part of the 50S ribosomal subunit. The cofactor is Zn(2+).

Its function is as follows. Binds the 23S rRNA. The protein is Large ribosomal subunit protein bL31 of Treponema denticola (strain ATCC 35405 / DSM 14222 / CIP 103919 / JCM 8153 / KCTC 15104).